We begin with the raw amino-acid sequence, 585 residues long: Amyloid protein-binding protein 2 (585 aa).

TPR repeat units follow at residues 50-83, 120-153, 206-239, 288-321, 333-367, 429-462, 471-505, and 514-547; these read QGRL…HHCF, IQVG…CTLH, AALY…ITAG, SDTL…RQSV, HEDL…ITHI, AKHY…KEQL, ALSV…GKKL, and EYDY…NRLR.

As to quaternary structure, component of a CRL2 E3 ubiquitin-protein ligase complex, also named ECS (Elongin BC-CUL2/5-SOCS-box protein) complex, composed of CUL2, Elongin BC (ELOB and ELOC), RBX1 and substrate-specific adapter APPBP2. Interacts with APP; APP interaction inhibits the E3 ubiquitin-protein ligase activity of the CRL2(APPBP2) complex. Rapidly degraded by the proteasome upon overexpression of a C-terminal fragment of APP.

The protein resides in the nucleus. It is found in the cytoplasm. It localises to the cytoskeleton. Its subcellular location is the membrane. It functions in the pathway protein modification; protein ubiquitination. E3 ubiquitin-protein ligase activity of the CRL2(APPBP2) complex is inhibited by APP. In terms of biological role, substrate-recognition component of a Cul2-RING (CRL2) E3 ubiquitin-protein ligase complex of the DesCEND (destruction via C-end degrons) pathway, which recognizes a C-degron located at the extreme C terminus of target proteins, leading to their ubiquitination and degradation. The C-degron recognized by the DesCEND pathway is usually a motif of less than ten residues and can be present in full-length proteins, truncated proteins or proteolytically cleaved forms. The CRL2(APPBP2) complex specifically recognizes proteins with a -Arg-Xaa-Xaa-Gly degron at the C-terminus, leading to their ubiquitination and degradation. The CRL2(APPBP2) complex mediates ubiquitination and degradation of truncated SELENOV selenoproteins produced by failed UGA/Sec decoding, which end with a -Arg-Xaa-Xaa-Gly degron. May play a role in intracellular protein transport: may be involved in the translocation of APP along microtubules toward the cell surface. This Homo sapiens (Human) protein is Amyloid protein-binding protein 2.